The primary structure comprises 251 residues: Aquaporin (251 aa).

The Cytoplasmic segment spans residues 1 to 11 (MAGETLRKIQS). Residues 12-32 (LLGEMVASFIFGFAVYSAILG) traverse the membrane as a helical segment. At 33-42 (STIAQQPAAK) the chain is on the extracellular side. The helical transmembrane segment at 43–63 (VIIGLTVGFSAIGIIYSFSDV) threads the bilayer. Residues 64–86 (TIAHFNPAITLAAILTGKMGILC) are Cytoplasmic-facing. The NPA signature appears at 69–71 (NPA). The chain crosses the membrane as a helical span at residues 87-107 (GLGYMLAQCVGFILAVCALLV). Residues 108–133 (CSPVGYKETLNVIRPAPAPFGADNLN) are Extracellular-facing. The chain crosses the membrane as a helical span at residues 134 to 154 (VFFTEFFLTAILVHIAFAVAV). Over 155 to 179 (NPYRPKVDTDGKFVDPDEKEPVDRR) the chain is Cytoplasmic. Residues 180-200 (ITAPLCIGLTLGFLAFMGLVT) form a helical membrane-spanning segment. Topologically, residues 201–224 (SGGAFNPGLTLAPVIMSNTWQHFW) are extracellular. The NPG motif lies at 206 to 208 (NPG). A helical membrane pass occupies residues 225–245 (LYLGAQYLGGLVGGLLQVFVL). The Cytoplasmic segment spans residues 246–251 (YKLSSN).

Belongs to the MIP/aquaporin (TC 1.A.8) family.

The protein resides in the cell membrane. Functionally, water channel required to facilitate the transport of water across membranes. Involved in osmotolerance. The chain is Aquaporin (AQP) from Encephalitozoon hellem (Microsporidian parasite).